Consider the following 136-residue polypeptide: Large ribosomal subunit protein uL16c (136 aa).

The segment covering 1–17 has biased composition (basic residues); sequence MLSPKRVKFRKQHRGRM. The tract at residues 1–25 is disordered; that stretch reads MLSPKRVKFRKQHRGRMKGISTRGN.

This sequence belongs to the universal ribosomal protein uL16 family. Part of the 50S ribosomal subunit.

Its subcellular location is the plastid. The protein resides in the chloroplast. This is Large ribosomal subunit protein uL16c from Anthoceros angustus (Hornwort).